We begin with the raw amino-acid sequence, 166 residues long: Disulfide bond formation protein B (166 aa).

The Cytoplasmic segment spans residues 1-11; that stretch reads MCNKLFAGRRG. Residues 12-28 traverse the membrane as a helical segment; it reads YFLGFVASFGLVGLALF. The Periplasmic portion of the chain corresponds to 29 to 46; it reads LQQKYNLEPCPLCISQRI. A disulfide bond links cysteine 38 and cysteine 41. A helical transmembrane segment spans residues 47–63; the sequence is AFMALGILFLLAALHNP. Residues 64–69 are Cytoplasmic-facing; that stretch reads GRVGRK. The chain crosses the membrane as a helical span at residues 70–87; it reads VYGLLHVIAAATGIGIAA. Residues 88-144 are Periplasmic-facing; the sequence is RHIWIQANPDKVMAECGAGFDYIMETFPLKKALDLIFKGTGECSAIDWTLFGLTIPQ. The cysteines at positions 103 and 130 are disulfide-linked. Residues 145-163 traverse the membrane as a helical segment; it reads LSLIAFVGLGLFAVLLAFH. The Cytoplasmic portion of the chain corresponds to 164 to 166; the sequence is KKA.

Belongs to the DsbB family.

Its subcellular location is the cell inner membrane. Its function is as follows. Required for disulfide bond formation in some periplasmic proteins. Acts by oxidizing the DsbA protein. This chain is Disulfide bond formation protein B, found in Methylobacillus flagellatus (strain ATCC 51484 / DSM 6875 / VKM B-1610 / KT).